The sequence spans 93 residues: Small ribosomal subunit protein uS19 (93 aa).

The protein belongs to the universal ribosomal protein uS19 family.

Its function is as follows. Protein S19 forms a complex with S13 that binds strongly to the 16S ribosomal RNA. The chain is Small ribosomal subunit protein uS19 from Oenococcus oeni (strain ATCC BAA-331 / PSU-1).